A 49-amino-acid chain; its full sequence is Large ribosomal subunit protein eL40 (49 aa).

The protein belongs to the eukaryotic ribosomal protein eL40 family.

The protein is Large ribosomal subunit protein eL40 of Methanosarcina acetivorans (strain ATCC 35395 / DSM 2834 / JCM 12185 / C2A).